The chain runs to 584 residues: BEL1-like homeodomain protein 8 (584 aa).

Positions 266–282 (SRFLEPAQKMLEEFCIS) are SR/KY domain. Residues 292–317 (ESTSMEDDDDDDDNLSGFSSSSEPLE) are disordered. Residues 295–305 (SMEDDDDDDDN) show a composition bias toward acidic residues. The BELL domain stretch occupies residues 316–387 (LEPKNRLKKA…ALRTAIAEHV (72 aa)). The homeobox DNA-binding region spans 424 to 486 (IWRPQRGLPE…NARVRLWKPM (63 aa)). Residues 503–529 (TSHNIEPSNRPNTVSSPSHEQTLTGLS) are disordered.

This sequence belongs to the TALE/BELL homeobox family. In terms of assembly, may form heterodimeric complex with the TALE/KNOX proteins STM and KNAT1/BP.

The protein localises to the nucleus. Its function is as follows. Required for specifying floral primordia and establishing early internode patterning events during inflorescence development. The polypeptide is BEL1-like homeodomain protein 8 (BLH8) (Arabidopsis thaliana (Mouse-ear cress)).